A 956-amino-acid chain; its full sequence is MAM domain-containing glycosylphosphatidylinositol anchor protein 1 (956 aa).

Positions 1 to 18 are cleaved as a signal peptide; it reads MEVTCLLLLALIPFHCRG. Ig-like domains follow at residues 24 to 123 and 132 to 230; these read PAQA…KSIR and PVLT…KAIT. Asparagine 42 is a glycosylation site (N-linked (GlcNAc...) asparagine). Intrachain disulfides connect cysteine 60–cysteine 108 and cysteine 157–cysteine 214. Residues asparagine 235, asparagine 247, asparagine 257, and asparagine 307 are each glycosylated (N-linked (GlcNAc...) asparagine). Ig-like domains follow at residues 240–323, 338–432, 440–532, and 539–650; these read PALK…KTVN, PDMI…IEVN, PTIS…AQVQ, and PEVE…PTRS. 2 cysteine pairs are disulfide-bonded: cysteine 262–cysteine 308 and cysteine 357–cysteine 415. The N-linked (GlcNAc...) asparagine glycan is linked to asparagine 432. Cystine bridges form between cysteine 463/cysteine 514 and cysteine 560/cysteine 616. The region spanning 627–744 is the Fibronectin type-III domain; sequence CLFQVSAKAY…SRIIHYTEPI (118 aa). The 168-residue stretch at 752–919 folds into the MAM domain; that stretch reads NTCHFEDEKI…VTLKKGECPR (168 aa). A compositionally biased stretch (polar residues) spans 780 to 789; that stretch reads LTQNPKRSPN. The segment at 780-799 is disordered; that stretch reads LTQNPKRSPNTGPPTDISGT. Serine 933 is lipidated: GPI-anchor amidated serine. The propeptide at 934-956 is removed in mature form; that stretch reads GAPRLSSLQLWGSMAIFLLALQR.

Interacts heterophilically through its MAM domain with proteins in axon-rich regions and through its Ig-like domains with proteins in differentiating muscle. Interacts (through the Ig-like domains) with NLGN2. As to expression, expressed by neurons in layers 2 and 3 of the cortex during their migration and settling in the cortical plate. Also found in layers 4 and 6a. From 9.5 dpc-13.5 dpc, detected in the marginal zone of the developing cortex. At 16.5 dpc, modest expression is found in the intermediate zone. At postnatal day 1, evident in the superficial cortical plate. By postnatal day 7, expression is limited to layers 2 and 3 throughout most of the cortex.

The protein localises to the cell membrane. Its function is as follows. Required for radial migration of cortical neurons in the superficial layer of the neocortex. Plays a role in the formation or maintenance of inhibitory synapses. May function by inhibiting the activity of NLGN2. This Mus musculus (Mouse) protein is MAM domain-containing glycosylphosphatidylinositol anchor protein 1.